A 529-amino-acid polypeptide reads, in one-letter code: Ectonucleoside triphosphate diphosphohydrolase 3 (529 aa).

Residues 1-22 are Cytoplasmic-facing; that stretch reads MFTVMTRQPCEQAGFRALSRTP. Residues 23–43 form a helical membrane-spanning segment; sequence AIVTLVVLLVSIVVLVTLTLI. At 44-485 the chain is on the extracellular side; the sequence is QIRHPQVLPP…PLIHLPIQPP (442 aa). N81 is a glycosylation site (N-linked (GlcNAc...) asparagine). An intrachain disulfide couples C92 to C116. An N-linked (GlcNAc...) asparagine glycan is attached at N149. E182 (proton acceptor) is an active-site residue. Position 222-226 (222-226) interacts with ATP; that stretch reads GASTQ. N-linked (GlcNAc...) asparagine glycans are attached at residues N238, N284, and N318. Disulfide bonds link C261–C308, C289–C334, and C347–C353. N381 and N392 each carry an N-linked (GlcNAc...) asparagine glycan. A disulfide bond links C399 and C422. Residue N454 is glycosylated (N-linked (GlcNAc...) asparagine). A helical membrane pass occupies residues 486–506; that stretch reads VFMGVLAFFTAIALLCLAFLL. Topologically, residues 507–529 are cytoplasmic; sequence YLCSSFRTKERSENAFDQAVDSD.

Belongs to the GDA1/CD39 NTPase family. Ca(2+) is required as a cofactor. Requires Mg(2+) as cofactor.

The protein resides in the cell membrane. The enzyme catalyses a ribonucleoside 5'-triphosphate + 2 H2O = a ribonucleoside 5'-phosphate + 2 phosphate + 2 H(+). In terms of biological role, catalyzes the hydrolysis of nucleoside triphosphates and diphosphates. Has a threefold preference for the hydrolysis of ATP and UTP over ADP and UDP. The sequence is that of Ectonucleoside triphosphate diphosphohydrolase 3 from Mus musculus (Mouse).